Consider the following 535-residue polypeptide: Beta-hexosaminidase 3 (535 aa).

Positions 1 to 24 (MRGSGAKIAGVLPLFMLFIAGTIS) are cleaved as a signal peptide. N-linked (GlcNAc...) asparagine glycosylation occurs at Asn-92. Cys-292 and Cys-334 are joined by a disulfide. Catalysis depends on Glu-329, which acts as the Proton donor. N-linked (GlcNAc...) asparagine glycans are attached at residues Asn-331, Asn-405, Asn-441, and Asn-496. Cys-506 and Cys-532 are oxidised to a cystine.

Belongs to the glycosyl hydrolase 20 family. Post-translationally, N-glycosylated. In terms of tissue distribution, expressed in roots, leaves, stems, flowers and siliques.

Its subcellular location is the cell membrane. It catalyses the reaction Hydrolysis of terminal non-reducing N-acetyl-D-hexosamine residues in N-acetyl-beta-D-hexosaminides.. Its activity is regulated as follows. Slightly inhibited by N-acetylcastanospermine. In terms of biological role, has a broad substrate specificity. Can use synthetic substrates such as pyridylaminated chitotriose, p-nitrophenyl-beta-N-acetylglucosaminide, p-nitrophenyl-2-acetamido-2-deoxy-beta-D-glucopyranoside (pNP-GlcNAc), p-nitrophenyl-2-acetamido-2-deoxy-beta-D-galactopyranoside (pNP-GalNAc), 4-methylumbelliferyl-2-acetamido-2-deoxy-beta-D-glucopyranoside (MU-GlcNAc), and 4-methylumbelliferyl-6-sulfo-2-acetamido-2-deoxy-beta-D-glucopyranoside (MU-GlcNAc-6SO(4)) as substrates. Removes terminal GlcNAc residues from alpha1,3- and alpha1,6-mannosyl branches of biantennary N-glycans without any strict branch preference. Required for the presence of paucimannosidic N-glycans in glycoproteins of roots and leaves. This Arabidopsis thaliana (Mouse-ear cress) protein is Beta-hexosaminidase 3 (HEXO3).